Here is a 311-residue protein sequence, read N- to C-terminus: HTH-type transcriptional regulator PcaQ (311 aa).

The region spanning 6–63 (IKFRHLQTFVEVARQKSVIRAAEILHVSQPAVTKTIRELEDVLGVSLLEREGRGIRIS) is the HTH lysR-type domain. Positions 23 to 42 (VIRAAEILHVSQPAVTKTIR) form a DNA-binding region, H-T-H motif.

It belongs to the LysR transcriptional regulatory family.

In terms of biological role, activates transcription of the pcaDCHGB operon for the catabolism of the phenolic compound protocatechuate. The protein is HTH-type transcriptional regulator PcaQ (pcaQ) of Agrobacterium fabrum (strain C58 / ATCC 33970) (Agrobacterium tumefaciens (strain C58)).